The chain runs to 596 residues: uncharacterized protein (596 aa).

Composition is skewed to basic residues over residues 1–10 (MRLRSQKRGN) and 18–29 (KTRKGKGKKLKP). The interval 1–30 (MRLRSQKRGNKFVALPAKTRKGKGKKLKPK) is disordered.

This is an uncharacterized protein from Magallana gigas (Pacific oyster).